Here is a 473-residue protein sequence, read N- to C-terminus: Serine palmitoyltransferase 1 (473 aa).

The Lumenal segment spans residues 1-15; it reads MATVAEQWVLVEMVQ. Positions 1 to 66 are interaction with SPTLC2; that stretch reads MATVAEQWVL…KEELIEEWQP (66 aa). Residues 16–36 form a helical membrane-spanning segment; that stretch reads ALYEAPAYHLILEGILILWII. Over 37–473 the chain is Cytoplasmic; it reads RLVFSKTYKL…IREAAQAVLL (437 aa). The residue at position 164 (Tyr-164) is a Phosphotyrosine; by ABL.

It belongs to the class-II pyridoxal-phosphate-dependent aminotransferase family. As to quaternary structure, component of the serine palmitoyltransferase (SPT) complex, which is also composed of SPTLC2 or SPTLC3 and SPTSSA or SPTSSB. The heterodimer with SPTLC2 or SPTLC3 forms the catalytic core of the enzyme, while SPTSSA or SPTSSB subunits determine substrate specificity. SPT also interacts with ORMDL proteins, especially ORMDL3, which negatively regulate SPT activity in the presence of ceramides. Forms dimers of heterodimers with SPTLC2. Interacts with RTN4 (isoform B). Requires pyridoxal 5'-phosphate as cofactor. Phosphorylation at Tyr-164 inhibits activity and promotes cell survival. As to expression, expressed in astrocytes.

Its subcellular location is the endoplasmic reticulum membrane. The enzyme catalyses L-serine + hexadecanoyl-CoA + H(+) = 3-oxosphinganine + CO2 + CoA. It catalyses the reaction octadecanoyl-CoA + L-serine + H(+) = 3-oxoeicosasphinganine + CO2 + CoA. It carries out the reaction tetradecanoyl-CoA + L-serine + H(+) = 3-oxohexadecasphinganine + CO2 + CoA. The catalysed reaction is dodecanoyl-CoA + L-serine + H(+) = 3-oxotetradecasphinganine + CO2 + CoA. It functions in the pathway lipid metabolism; sphingolipid metabolism. SPT complex catalytic activity is negatively regulated by ORMDL proteins, including ORMDL3, in the presence of ceramides. This mechanism allows to maintain ceramide levels at sufficient concentrations for the production of complex sphingolipids, but which prevents the accumulation of ceramides to levels that trigger apoptosis. Component of the serine palmitoyltransferase multisubunit enzyme (SPT) that catalyzes the initial and rate-limiting step in sphingolipid biosynthesis by condensing L-serine and activated acyl-CoA (most commonly palmitoyl-CoA) to form long-chain bases. The SPT complex is also composed of SPTLC2 or SPTLC3 and SPTSSA or SPTSSB. Within this complex, the heterodimer with SPTLC2 or SPTLC3 forms the catalytic core. The composition of the serine palmitoyltransferase (SPT) complex determines the substrate preference. The SPTLC1-SPTLC2-SPTSSA complex shows a strong preference for C16-CoA substrate, while the SPTLC1-SPTLC3-SPTSSA isozyme uses both C14-CoA and C16-CoA as substrates, with a slight preference for C14-CoA. The SPTLC1-SPTLC2-SPTSSB complex shows a strong preference for C18-CoA substrate, while the SPTLC1-SPTLC3-SPTSSB isozyme displays an ability to use a broader range of acyl-CoAs, without apparent preference. Required for adipocyte cell viability and metabolic homeostasis. This Rattus norvegicus (Rat) protein is Serine palmitoyltransferase 1.